The chain runs to 64 residues: Large ribosomal subunit protein bL28 (64 aa).

A disordered region spans residues 1–27 (MAKRDQLTGKGPLSGNTRSHAMNHSKR).

This sequence belongs to the bacterial ribosomal protein bL28 family.

In Ureaplasma parvum serovar 3 (strain ATCC 27815 / 27 / NCTC 11736), this protein is Large ribosomal subunit protein bL28.